The sequence spans 123 residues: Fluoride-specific ion channel FluC (123 aa).

A run of 4 helical transmembrane segments spans residues 3 to 23, 34 to 54, 67 to 87, and 99 to 119; these read IAWVALGGAIGAVARYVLSNA, WGTLSVNLLGSFIMGLLFYLF, LVLVGGLGAFTTFSTFSLETL, and LLNMLSSVLLCVLAAYLGLVV. The Na(+) site is built by G74 and T77.

This sequence belongs to the fluoride channel Fluc/FEX (TC 1.A.43) family.

It localises to the cell inner membrane. The catalysed reaction is fluoride(in) = fluoride(out). Na(+) is not transported, but it plays an essential structural role and its presence is essential for fluoride channel function. Fluoride-specific ion channel. Important for reducing fluoride concentration in the cell, thus reducing its toxicity. The polypeptide is Fluoride-specific ion channel FluC (Magnetococcus marinus (strain ATCC BAA-1437 / JCM 17883 / MC-1)).